The sequence spans 94 residues: MSRSVSKGPFVDLHLVNKVLSARQNNDKKPIKTWSRRSTILPDFIGLTISVHNGRQHVPVFVTENMVGHKLGEFSHTRTFKGHAGDKKAAGSKR.

The disordered stretch occupies residues 75–94 (SHTRTFKGHAGDKKAAGSKR). The span at 83–94 (HAGDKKAAGSKR) shows a compositional bias: basic and acidic residues.

The protein belongs to the universal ribosomal protein uS19 family.

Its function is as follows. Protein S19 forms a complex with S13 that binds strongly to the 16S ribosomal RNA. The protein is Small ribosomal subunit protein uS19 of Nitrosomonas europaea (strain ATCC 19718 / CIP 103999 / KCTC 2705 / NBRC 14298).